The primary structure comprises 746 residues: NAD(P)H-quinone oxidoreductase subunit 5, chloroplastic (746 aa).

16 consecutive transmembrane segments (helical) span residues 9–29 (WIIP…LLLF), 40–60 (WTFL…YLSI), 89–109 (IDPL…LVLI), 125–145 (FAYM…SNLI), 147–167 (VYFF…FWFT), 185–205 (GDFG…SFEF), 221–241 (VNLL…IAKS), 258–278 (TPIS…FLVA), 280–300 (LLPL…IGII), 327–347 (LGYM…FHLI), 354–374 (ALLF…VGYS), 396–416 (TAFL…CFWS), 425–445 (LLFS…TAFY), 547–567 (ILFP…IGIP), 608–628 (FSVS…KPFY), and 723–743 (YLFL…FFYF).

The protein belongs to the complex I subunit 5 family. NDH is composed of at least 16 different subunits, 5 of which are encoded in the nucleus.

It is found in the plastid. The protein localises to the chloroplast thylakoid membrane. It carries out the reaction a plastoquinone + NADH + (n+1) H(+)(in) = a plastoquinol + NAD(+) + n H(+)(out). It catalyses the reaction a plastoquinone + NADPH + (n+1) H(+)(in) = a plastoquinol + NADP(+) + n H(+)(out). Functionally, NDH shuttles electrons from NAD(P)H:plastoquinone, via FMN and iron-sulfur (Fe-S) centers, to quinones in the photosynthetic chain and possibly in a chloroplast respiratory chain. The immediate electron acceptor for the enzyme in this species is believed to be plastoquinone. Couples the redox reaction to proton translocation, and thus conserves the redox energy in a proton gradient. This Lepidium virginicum (Virginia pepperweed) protein is NAD(P)H-quinone oxidoreductase subunit 5, chloroplastic (ndhF).